Consider the following 785-residue polypeptide: Altered inheritance of mitochondria protein 3-2 (785 aa).

Disordered stretches follow at residues 33-122 (TGYQ…QPYM), 142-406 (QQVA…SENL), and 418-785 (NVDV…RLHK). Residues 91-102 (GSSGNSANGSSA) are compositionally biased toward low complexity. Polar residues-rich tracts occupy residues 103–122 (TIPTLSNTNNTAQLNEQPYM) and 143–199 (QVAT…QLNI). Basic and acidic residues predominate over residues 249-260 (KPYDWEEQKTTK). 5 stretches are compositionally biased toward polar residues: residues 283–310 (SRQGSNSTPPSRTHTGNNTSTASVTTTG), 350–366 (ATNNSSDLKLSGAQNTK), 375–388 (TNKSAERPNSSNVM), 395–405 (QMNTKANSSEN), and 455–465 (SSISRDNYNSI). Over residues 478-497 (NTGEREGAQELKADIAERSQ) the composition is skewed to basic and acidic residues. Positions 527–556 (AQTSSDIPQKSSLVTDESNISVPNKSQQPM) are enriched in polar residues. Basic and acidic residues-rich tracts occupy residues 587 to 613 (KSLEESHTPSNKLSEKPKPPKKPEQLK) and 624 to 637 (KNMKNKDQLFDNKN). A compositionally biased stretch (polar residues) spans 659–671 (SLTSEGNHMNLNT). Composition is skewed to basic and acidic residues over residues 672 to 686 (EKGKETTIEKPDESK) and 700 to 710 (FKREELSKEVV).

This sequence belongs to the AIM3 family.

The protein resides in the membrane raft. This Candida glabrata (strain ATCC 2001 / BCRC 20586 / JCM 3761 / NBRC 0622 / NRRL Y-65 / CBS 138) (Yeast) protein is Altered inheritance of mitochondria protein 3-2 (AIM3-2).